The sequence spans 301 residues: Sulfate adenylyltransferase subunit 2 (301 aa).

This sequence belongs to the PAPS reductase family. CysD subfamily. Heterodimer composed of CysD, the smaller subunit, and CysN.

It catalyses the reaction sulfate + ATP + H(+) = adenosine 5'-phosphosulfate + diphosphate. It participates in sulfur metabolism; hydrogen sulfide biosynthesis; sulfite from sulfate: step 1/3. In terms of biological role, with CysN forms the ATP sulfurylase (ATPS) that catalyzes the adenylation of sulfate producing adenosine 5'-phosphosulfate (APS) and diphosphate, the first enzymatic step in sulfur assimilation pathway. APS synthesis involves the formation of a high-energy phosphoric-sulfuric acid anhydride bond driven by GTP hydrolysis by CysN coupled to ATP hydrolysis by CysD. The sequence is that of Sulfate adenylyltransferase subunit 2 from Citrifermentans bemidjiense (strain ATCC BAA-1014 / DSM 16622 / JCM 12645 / Bem) (Geobacter bemidjiensis).